A 538-amino-acid polypeptide reads, in one-letter code: NADH-quinone oxidoreductase subunit N (538 aa).

14 consecutive transmembrane segments (helical) span residues isoleucine 12–leucine 32, leucine 47–serine 67, proline 81–alanine 101, glycine 144–phenylalanine 164, leucine 170–leucine 190, tyrosine 205–glycine 225, phenylalanine 248–proline 268, isoleucine 294–aspartate 314, proline 317–glutamine 337, methionine 343–asparagine 363, leucine 371–valine 391, alanine 423–threonine 443, serine 472–valine 492, and glycine 502–alanine 522.

The protein belongs to the complex I subunit 2 family. As to quaternary structure, NDH-1 is composed of 14 different subunits. Subunits NuoA, H, J, K, L, M, N constitute the membrane sector of the complex.

The protein resides in the cell membrane. It catalyses the reaction a quinone + NADH + 5 H(+)(in) = a quinol + NAD(+) + 4 H(+)(out). Functionally, NDH-1 shuttles electrons from NADH, via FMN and iron-sulfur (Fe-S) centers, to quinones in the respiratory chain. The immediate electron acceptor for the enzyme in this species is believed to be a menaquinone. Couples the redox reaction to proton translocation (for every two electrons transferred, four hydrogen ions are translocated across the cytoplasmic membrane), and thus conserves the redox energy in a proton gradient. This is NADH-quinone oxidoreductase subunit N from Mycobacteroides abscessus (strain ATCC 19977 / DSM 44196 / CCUG 20993 / CIP 104536 / JCM 13569 / NCTC 13031 / TMC 1543 / L948) (Mycobacterium abscessus).